An 815-amino-acid chain; its full sequence is Protein-glutamine gamma-glutamyltransferase K (815 aa).

Positions 1-10 (MEGPRSDVGR) are enriched in basic and acidic residues. Disordered regions lie at residues 1–48 (MEGP…SFWA) and 62–101 (DDWG…AAGD). Residues 16–25 (WQPPTTPSPE) are compositionally biased toward pro residues. Residue Thr21 is modified to Phosphothreonine. Phosphoserine occurs at positions 23, 71, 83, 91, and 94. Positions 66 to 78 (PEPSGSRSRGTSS) are enriched in low complexity. The span at 79-91 (RGRDSRGGRRPES) shows a compositional bias: basic and acidic residues. Active-site residues include Cys376, His435, and Asp458. The Ca(2+) site is built by Asn498, Asp500, Glu547, and Glu552. Residues 791 to 815 (GSGFSDAGGDSRSGENIPMAYRGGA) are disordered. Ser803 is subject to Phosphoserine.

It belongs to the transglutaminase superfamily. Transglutaminase family. Interacts with PLAAT4. It depends on Ca(2+) as a cofactor. In terms of processing, tyrosine-phosphorylated. Post-translationally, palmitoylated. The membrane anchorage region possesses a cluster of five cysteines within which fatty acid(s) may become thioester-linked. It is subject to phorbol ester-stimulated phosphorylation and is hypersensitive to proteolysis, which releases the enzyme in a soluble form. In terms of tissue distribution, expressed in large amounts in epithelial tissues (lung, liver and kidney).

It is found in the membrane. It carries out the reaction L-glutaminyl-[protein] + L-lysyl-[protein] = [protein]-L-lysyl-N(6)-5-L-glutamyl-[protein] + NH4(+). Its function is as follows. Catalyzes the cross-linking of proteins and the conjugation of polyamines to proteins. Responsible for cross-linking epidermal proteins during formation of the stratum corneum. Involved in cell proliferation. This chain is Protein-glutamine gamma-glutamyltransferase K (Tgm1), found in Mus musculus (Mouse).